The primary structure comprises 499 residues: Kynurenine 3-monooxygenase 3 (499 aa).

This sequence belongs to the aromatic-ring hydroxylase family. KMO subfamily. FAD serves as cofactor.

The protein localises to the mitochondrion outer membrane. It catalyses the reaction L-kynurenine + NADPH + O2 + H(+) = 3-hydroxy-L-kynurenine + NADP(+) + H2O. Its pathway is cofactor biosynthesis; NAD(+) biosynthesis; quinolinate from L-kynurenine: step 1/3. In terms of biological role, catalyzes the hydroxylation of L-kynurenine (L-Kyn) to form 3-hydroxy-L-kynurenine (L-3OHKyn). Required for synthesis of quinolinic acid. The polypeptide is Kynurenine 3-monooxygenase 3 (bna4-3) (Aspergillus niger (strain ATCC MYA-4892 / CBS 513.88 / FGSC A1513)).